The primary structure comprises 679 residues: Kelch-like protein diablo (679 aa).

Gly residues predominate over residues 1 to 48 (MGDLPGGGGGAAGGAGAAGGGGGGGNGAAGSSSSGGGASGSGGGGPGS). The disordered stretch occupies residues 1–84 (MGDLPGGGGG…RLSHTSEKHP (84 aa)). The BTB domain maps to 101–168 (CDVVLNVGGR…CYTAHIIVEE (68 aa)). The BACK domain occupies 203-305 (CLGIRAFADT…SPKFLVGTVG (103 aa)). Kelch repeat units lie at residues 352–398 (VLFA…VLND), 400–446 (LYAV…VLDG), 447–493 (FLYA…VLGG), 495–540 (LYAI…VFNN), 542–587 (IYAV…VVNG), and 588–634 (QLYA…VMRA). Positions 643–679 (CDNNSSNNNNNNYNLKHQQQQPQQQQQQQQQQTQQQL) are disordered. Positions 645-679 (NNSSNNNNNNYNLKHQQQQPQQQQQQQQQQTQQQL) are enriched in low complexity.

The protein operates within protein modification; protein ubiquitination. In terms of biological role, probable substrate-specific adapter of an E3 ubiquitin-protein ligase complex which mediates the ubiquitination and subsequent proteasomal degradation of target proteins. May have a role in synapse differentiation and growth. The chain is Kelch-like protein diablo from Drosophila willistoni (Fruit fly).